A 435-amino-acid chain; its full sequence is FAD-dependent monooxygenase ATEG_07662 (435 aa).

A helical membrane pass occupies residues 8 to 28 (PLDVAIIGGGIIGIMTALGLL). Residues E38, A51, and R119 each coordinate FAD. N-linked (GlcNAc...) asparagine glycosylation occurs at N191. Residue R201 is part of the active site. FAD-binding residues include D317 and A330.

This sequence belongs to the paxM FAD-dependent monooxygenase family. It depends on FAD as a cofactor.

Its subcellular location is the membrane. It participates in secondary metabolite biosynthesis. FAD-dependent monooxygenase; part of the cluster B that mediates the biosynthesis of azasperpyranones, members of the azaphilone family that exhibit anti-cancer activities. Azasperpyranones are synthesized by 2 clusters, A and B. Cluster A is responsible for the production of the polyhydric phenol moiety while the azaphilonoid scaffold is produced by the cluster B. The non-reducing polyketide synthase ATEG_03629 produces 5-methyl orsellinic acid, which is then reduced to 5-methyl orsellinic aldehyde by the NRPS-like protein ATEG_03630. 5-methyl orsellinic aldehyde is then first hydroxylated by the FAD-dependent monooxygenase ATEG_03635 and subsequently hydroxylated by the cytochrome P450 monooxygenase ATEG_03631 to produce the unstable polyhydric phenol precursor of azasperpyranones. On the other hand, the polyketide synthase ATEG_07659 is responsible for producing the 3,5-dimethyloctadienone moiety from acetyl-CoA, three malonyl-CoA, and two S-adenosyl methionines (SAM). The 3,5-dimethyloctadienone moiety is then loaded onto the SAT domain of ATEG_07661 and extended with four malonyl-CoA and one SAM, which leads to the formation of 2,4-dihydroxy-6-(5,7-dimethyl-2-oxo-trans-3-trans-5-nonadienyl)-3-methylbenzaldehyde (compound 8) after reductive release and aldol condensation. The FAD-dependent monooxygenase ATEG_07662 is the next enzyme in the biosynthesis sequence and hydroxylates the side chain at the benzylic position of compound 8. In Aspergillus nidulans, afoF, the ortholog of the FAD-dependent oxygenase ATEG_07660, is the key enzyme for the biosynthesis of asperfuranone by catalyzing the hydroxylation at C-8 of to prevent the formation of a six-membered ring hemiacetal intermediate and thus facilitating the formation of a five-membered ring to produce asperfuranone. In Aspergillus terreus, ATEG_07660 is probably not functional, which leads to the formation of the six-membered ring hemiacetal intermediate presperpyranone instead of asperfuranone. Finally, ATEG_03636 is involved in the condensation of the polyhydric phenol moiety produced by cluster A and the perasperpyranone precursor produced by cluster B, to yield azasperpyranone A. Further modifications of azasperpyranone A result in the production of derivatives, including azasperpyranone B to F. The polypeptide is FAD-dependent monooxygenase ATEG_07662 (Aspergillus terreus (strain NIH 2624 / FGSC A1156)).